We begin with the raw amino-acid sequence, 852 residues long: Bifunctional heparan sulfate N-deacetylase/N-sulfotransferase 1 (852 aa).

At 1 to 13 the chain is on the cytoplasmic side; sequence MIITPYLNRKITR. A helical; Signal-anchor for type II membrane protein transmembrane segment spans residues 14–34; that stretch reads PLKWILALIFLYLIYICLFSN. A heparan sulfate N-deacetylase 1 region spans residues 34–574; sequence NNSKPPKPRK…PRHHAILPPS (541 aa). The Lumenal segment spans residues 35 to 852; the sequence is NSKPPKPRKK…WLEESVRIRA (818 aa). N-linked (GlcNAc...) asparagine glycosylation is found at Asn50, Asn72, Asn261, Asn328, Asn377, Asn428, and Asn576. The tract at residues 575-852 is heparan sulfate N-sulfotransferase 1; it reads INCTKKSLPD…WLEESVRIRA (278 aa). Catalysis depends on Lys592, which acts as the For sulfotransferase activity. 3'-phosphoadenylyl sulfate is bound at residue 592 to 596; that stretch reads KTGST. Asn607 carries an N-linked (GlcNAc...) asparagine glycan. Position 686 (Ser686) interacts with 3'-phosphoadenylyl sulfate. Residue Asn712 is glycosylated (N-linked (GlcNAc...) asparagine). Cys789 and Cys798 are oxidised to a cystine. Residue 803–807 participates in 3'-phosphoadenylyl sulfate binding; it reads KGRKY.

The protein belongs to the sulfotransferase 1 family. NDST subfamily. As to quaternary structure, monomer. In terms of tissue distribution, present in some specific neurons in head and tail regions and muscles.

The protein resides in the golgi apparatus membrane. The enzyme catalyses alpha-D-glucosaminyl-[heparan sulfate](n) + 3'-phosphoadenylyl sulfate = N-sulfo-alpha-D-glucosaminyl-[heparan sulfate](n) + adenosine 3',5'-bisphosphate + 2 H(+). It functions in the pathway glycan metabolism; heparan sulfate biosynthesis. It participates in glycan metabolism; heparin biosynthesis. Functionally, essential bifunctional enzyme that catalyzes both the N-deacetylation and the N-sulfation of glucosamine (GlcNAc) of the glycosaminoglycan in heparan sulfate. Modifies the GlcNAc-GlcA disaccharide repeating sugar backbone to make N-sulfated heparosan, a prerequisite substrate for later modifications in heparin biosynthesis. The polypeptide is Bifunctional heparan sulfate N-deacetylase/N-sulfotransferase 1 (hst-1) (Caenorhabditis elegans).